We begin with the raw amino-acid sequence, 283 residues long: Release factor glutamine methyltransferase (283 aa).

Positions 143 and 189 each coordinate S-adenosyl-L-methionine. 189 to 192 lines the substrate pocket; the sequence is NPPY.

This sequence belongs to the protein N5-glutamine methyltransferase family. PrmC subfamily.

The catalysed reaction is L-glutaminyl-[peptide chain release factor] + S-adenosyl-L-methionine = N(5)-methyl-L-glutaminyl-[peptide chain release factor] + S-adenosyl-L-homocysteine + H(+). In terms of biological role, methylates the class 1 translation termination release factors RF1/PrfA and RF2/PrfB on the glutamine residue of the universally conserved GGQ motif. The polypeptide is Release factor glutamine methyltransferase (Clostridium botulinum (strain Hall / ATCC 3502 / NCTC 13319 / Type A)).